Consider the following 51-residue polypeptide: Sperm protamine P1 (51 aa).

It belongs to the protamine P1 family. Cross-linked by interchain disulfide bonds around the DNA-helix. In terms of tissue distribution, testis.

Its subcellular location is the nucleus. The protein resides in the chromosome. Functionally, protamines substitute for histones in the chromatin of sperm during the haploid phase of spermatogenesis. They compact sperm DNA into a highly condensed, stable and inactive complex. The polypeptide is Sperm protamine P1 (PRM1) (Pongo pygmaeus (Bornean orangutan)).